The following is a 195-amino-acid chain: Glycerol-3-phosphate acyltransferase (195 aa).

6 helical membrane-spanning segments follow: residues 2–22 (IFFS…SSAI), 54–74 (IAIS…WLGY), 80–100 (PIFL…PIFF), 107–127 (GVAT…IVMI), 132–152 (LTVL…FIIP), and 155–175 (AWHF…LVVI).

Belongs to the PlsY family. Probably interacts with PlsX.

Its subcellular location is the cell inner membrane. The enzyme catalyses an acyl phosphate + sn-glycerol 3-phosphate = a 1-acyl-sn-glycero-3-phosphate + phosphate. It participates in lipid metabolism; phospholipid metabolism. Catalyzes the transfer of an acyl group from acyl-phosphate (acyl-PO(4)) to glycerol-3-phosphate (G3P) to form lysophosphatidic acid (LPA). This enzyme utilizes acyl-phosphate as fatty acyl donor, but not acyl-CoA or acyl-ACP. The protein is Glycerol-3-phosphate acyltransferase of Blochmanniella pennsylvanica (strain BPEN).